The primary structure comprises 754 residues: C2H2 finger domain transcription factor crzA (754 aa).

5 disordered regions span residues Met1–Gly51, Ser63–Leu150, Val187–Thr227, Gln269–Val299, and Gly384–Lys543. A compositionally biased stretch (low complexity) spans His30–Gln44. Polar residues-rich tracts occupy residues Ser63 to Ala80 and Thr94 to Gly114. The span at Gln130–Gln140 shows a compositional bias: low complexity. Polar residues predominate over residues Pro141–Leu150. A compositionally biased stretch (low complexity) spans Gln189–Pro209. Composition is skewed to polar residues over residues Leu210 to Thr227 and Ser279 to His293. Low complexity-rich tracts occupy residues Ser459–Leu472 and Arg491–Ser515. C2H2-type zinc fingers lie at residues Phe548–His570 and Phe576–His598. A C2H2-type 3; degenerate zinc finger spans residues Phe604–Glu635. Residues Ala708–Leu737 are disordered.

The protein resides in the nucleus. Its subcellular location is the cytoplasm. Functionally, transcription factor involved in the regulation of calcium ion homeostasis. Regulates genes encoding calcium transporters, transcription factors and genes that could be directly or indirectly involved in calcium metabolism. Supports especially pmcA, pmcB and pmcC expression encoding for calcium-translocating P-type ATPases. Binds target promoters at motif A[GT][CG]CA[AC][AG]. Plays an essential role germination, radial growth, and asexual development. Also plays a major role in proper chitin and glucan incorporation into the cell wall. Involved in the high-osmolarity glycerol response (HOG) signaling pathway. Required for pathogenicity in an experimental murine model of invasive pulmonary aspergillosis. The chain is C2H2 finger domain transcription factor crzA from Aspergillus fumigatus (strain ATCC MYA-4609 / CBS 101355 / FGSC A1100 / Af293) (Neosartorya fumigata).